The sequence spans 419 residues: Transcription termination factor Rho (419 aa).

The Rho RNA-BD domain maps to 48–123 (DIFGDGVLEI…LKVNEVNYDK (76 aa)). 3 RNA-binding regions span residues 61 to 66 (GFGFLR), 78 to 80 (DIY), and 108 to 110 (ERY). ATP contacts are provided by residues 169 to 174 (GRGQRG), 181 to 186 (KAGKTI), and R212. The RNA-binding 2 stretch occupies residues 284-288 (VLTGG).

Belongs to the Rho family. As to quaternary structure, homohexamer. The homohexamer assembles into an open ring structure.

Facilitates transcription termination by a mechanism that involves Rho binding to the nascent RNA, activation of Rho's RNA-dependent ATPase activity, and release of the mRNA from the DNA template. The polypeptide is Transcription termination factor Rho (Buchnera aphidicola subsp. Acyrthosiphon pisum (strain APS) (Acyrthosiphon pisum symbiotic bacterium)).